Consider the following 103-residue polypeptide: MANPLLCPLLTEKSTGLTEKKGQYVLVVRPDADKLTIKDAIEKKFGVSVTSVRTINYLGKLRAQNTRRGRIIGKKSDWKKAIVTLAEGQSIDYYSGTAQKSEG.

Belongs to the universal ribosomal protein uL23 family. In terms of assembly, part of the 50S ribosomal subunit. Contacts protein L29, and trigger factor when it is bound to the ribosome.

One of the early assembly proteins it binds 23S rRNA. One of the proteins that surrounds the polypeptide exit tunnel on the outside of the ribosome. Forms the main docking site for trigger factor binding to the ribosome. The protein is Large ribosomal subunit protein uL23 of Chlorobium chlorochromatii (strain CaD3).